Here is a 583-residue protein sequence, read N- to C-terminus: COP9 signalosome complex subunit 10 (583 aa).

Positions 1-35 (MSDEEDYAEYMMSEEDMSSFEMDVDSDVEPDDAGL) are enriched in acidic residues. The interval 1–55 (MSDEEDYAEYMMSEEDMSSFEMDVDSDVEPDDAGLEQDQQVTGDDYDGSAGNSGD) is disordered. Residues 297–485 (DHYNQSQMLS…DYVYFGEEYF (189 aa)) form the PCI domain.

In terms of assembly, component of a COP9 signalosome-like (CSN) complex.

It is found in the cytoplasm. The protein localises to the nucleus. Functionally, component of the COP9 signalosome (CSN) complex that acts as an regulator of the ubiquitin (Ubl) conjugation pathway by mediating the deneddylation of the cullin subunit of SCF-type E3 ubiquitin-protein ligase complexes. The CSN complex is involved in the regulation of the mating pheromone response. In Kluyveromyces lactis (strain ATCC 8585 / CBS 2359 / DSM 70799 / NBRC 1267 / NRRL Y-1140 / WM37) (Yeast), this protein is COP9 signalosome complex subunit 10 (RRI2).